Consider the following 389-residue polypeptide: Na(+)/H(+) antiporter NhaA (389 aa).

The next 11 helical transmembrane spans lie at 14-34 (AGGI…NSPL), 59-79 (LILW…GLEV), 95-115 (SLPT…YLLF), 124-144 (AGWA…MALL), 154-174 (VFLL…IALF), 177-197 (TDLS…LVGL), 213-233 (LILW…GVII), 257-277 (PWST…VYVG), 292-312 (IALG…YIAV), 328-348 (IAPV…IASL), and 363-383 (LGTL…LSKV).

Belongs to the NhaA Na(+)/H(+) (TC 2.A.33) antiporter family.

It localises to the cell inner membrane. The catalysed reaction is Na(+)(in) + 2 H(+)(out) = Na(+)(out) + 2 H(+)(in). In terms of biological role, na(+)/H(+) antiporter that extrudes sodium in exchange for external protons. The polypeptide is Na(+)/H(+) antiporter NhaA (Shewanella baltica (strain OS195)).